A 196-amino-acid chain; its full sequence is Blue copper protein (196 aa).

A signal peptide spans 1–22 (MAGVFKTVTFLVLVFAAVVVFA). The Phytocyanin domain maps to 23-125 (EDYDVGDDTE…GQKLSITVVA (103 aa)). Histidine 66 contributes to the Cu cation binding site. An intrachain disulfide couples cysteine 79 to cysteine 113. N-linked (GlcNAc...) asparagine glycosylation occurs at asparagine 98. Residues cysteine 107, histidine 112, and glutamine 117 each coordinate Cu cation. The interval 133–173 (TPGAGATPAPGSTPSTGGTTPPTAGGTTTPSGSSGTTTPAG) is disordered. Over residues 135 to 173 (GAGATPAPGSTPSTGGTTPPTAGGTTTPSGSSGTTTPAG) the composition is skewed to low complexity. A lipid anchor (GPI-anchor amidated asparagine) is attached at asparagine 174. Residues 175 to 196 (AASSLGGATFLVAFVSAVVALF) constitute a propeptide, removed in mature form.

Its subcellular location is the cell membrane. Its function is as follows. Probably acts as an electron carrier. The protein is Blue copper protein (BCB) of Arabidopsis thaliana (Mouse-ear cress).